The following is a 357-amino-acid chain: 3-dehydroquinate synthase (357 aa).

Residues Gly104 to Asp108, Thr128 to Thr129, Lys141, and Phe168 to Thr171 each bind NAD(+). Positions 183, 243, and 260 each coordinate Zn(2+).

This sequence belongs to the sugar phosphate cyclases superfamily. Dehydroquinate synthase family. The cofactor is Co(2+). Zn(2+) is required as a cofactor. Requires NAD(+) as cofactor.

It localises to the cytoplasm. The enzyme catalyses 7-phospho-2-dehydro-3-deoxy-D-arabino-heptonate = 3-dehydroquinate + phosphate. The protein operates within metabolic intermediate biosynthesis; chorismate biosynthesis; chorismate from D-erythrose 4-phosphate and phosphoenolpyruvate: step 2/7. Functionally, catalyzes the conversion of 3-deoxy-D-arabino-heptulosonate 7-phosphate (DAHP) to dehydroquinate (DHQ). The sequence is that of 3-dehydroquinate synthase from Streptococcus pyogenes serotype M49 (strain NZ131).